Here is a 38-residue protein sequence, read N- to C-terminus: Photosystem II reaction center protein L (38 aa).

A helical membrane pass occupies residues 17 to 37; sequence SLFWGLLLIFVLAILFSNYFF.

Belongs to the PsbL family. As to quaternary structure, PSII is composed of 1 copy each of membrane proteins PsbA, PsbB, PsbC, PsbD, PsbE, PsbF, PsbH, PsbI, PsbJ, PsbK, PsbL, PsbM, PsbT, PsbX, PsbY, PsbZ, Psb30/Ycf12, at least 3 peripheral proteins of the oxygen-evolving complex and a large number of cofactors. It forms dimeric complexes.

The protein resides in the plastid. Its subcellular location is the chloroplast thylakoid membrane. One of the components of the core complex of photosystem II (PSII). PSII is a light-driven water:plastoquinone oxidoreductase that uses light energy to abstract electrons from H(2)O, generating O(2) and a proton gradient subsequently used for ATP formation. It consists of a core antenna complex that captures photons, and an electron transfer chain that converts photonic excitation into a charge separation. This subunit is found at the monomer-monomer interface and is required for correct PSII assembly and/or dimerization. This Chara vulgaris (Common stonewort) protein is Photosystem II reaction center protein L.